We begin with the raw amino-acid sequence, 80 residues long: Homeobox protein 7 (80 aa).

Residues S8–S67 constitute a DNA-binding region (homeobox). A disordered region spans residues R60–K80. Residues N70–K80 are compositionally biased toward low complexity.

The protein resides in the nucleus. In terms of biological role, putative transcription factor. In Dictyostelium discoideum (Social amoeba), this protein is Homeobox protein 7 (hbx7).